A 383-amino-acid polypeptide reads, in one-letter code: Erythronate-4-phosphate dehydrogenase (383 aa).

Substrate is bound by residues S45 and T66. Positions 146 and 175 each coordinate NAD(+). R208 is an active-site residue. Residue D232 participates in NAD(+) binding. E237 is a catalytic residue. The active-site Proton donor is the H254. G257 serves as a coordination point for NAD(+).

The protein belongs to the D-isomer specific 2-hydroxyacid dehydrogenase family. PdxB subfamily. Homodimer.

The protein localises to the cytoplasm. It catalyses the reaction 4-phospho-D-erythronate + NAD(+) = (R)-3-hydroxy-2-oxo-4-phosphooxybutanoate + NADH + H(+). It functions in the pathway cofactor biosynthesis; pyridoxine 5'-phosphate biosynthesis; pyridoxine 5'-phosphate from D-erythrose 4-phosphate: step 2/5. Its function is as follows. Catalyzes the oxidation of erythronate-4-phosphate to 3-hydroxy-2-oxo-4-phosphonooxybutanoate. The protein is Erythronate-4-phosphate dehydrogenase of Chromohalobacter salexigens (strain ATCC BAA-138 / DSM 3043 / CIP 106854 / NCIMB 13768 / 1H11).